Here is a 159-residue protein sequence, read N- to C-terminus: U1 small nuclear ribonucleoprotein C (159 aa).

Residues 4–36 form a Matrin-type zinc finger; sequence FYCDYCDTYLTHDSPSVRKTHCSGRKHKENVKD. Disordered stretches follow at residues 63–95 and 139–159; these read PPTPFAAPPAGSAMIPPPPSLGGPPRPGMMPAP and MRPPTRPMMLQSRPGMARPDR. Residues 77-95 show a composition bias toward pro residues; it reads IPPPPSLGGPPRPGMMPAP.

This sequence belongs to the U1 small nuclear ribonucleoprotein C family. In terms of assembly, component of the U1 snRNP. The U1 snRNP is composed of the U1 snRNA and the 7 core Sm proteins snrpb, snrpd1, snrpd2, snrpd3, snrpe, snrpf and snrpg that assemble in a heptameric protein ring on the Sm site of the small nuclear RNA to form the core snRNP, and at least 3 U1 snRNP-specific proteins snrnp70/U1-70K, snrpa/U1-A and snrpc/U1-C. snrpc/U1-C interacts with U1 snRNA and the 5' splice-site region of the pre-mRNA.

It localises to the nucleus. Its function is as follows. Component of the spliceosomal U1 snRNP, which is essential for recognition of the pre-mRNA 5' splice-site and the subsequent assembly of the spliceosome. SNRPC/U1-C is directly involved in initial 5' splice-site recognition for both constitutive and regulated alternative splicing. The interaction with the 5' splice-site seems to precede base-pairing between the pre-mRNA and the U1 snRNA. Stimulates commitment or early (E) complex formation by stabilizing the base pairing of the 5' end of the U1 snRNA and the 5' splice-site region. The sequence is that of U1 small nuclear ribonucleoprotein C from Xenopus laevis (African clawed frog).